Reading from the N-terminus, the 140-residue chain is Nucleoside diphosphate kinase (140 aa).

Lysine 11, phenylalanine 59, arginine 87, threonine 93, arginine 104, and asparagine 114 together coordinate ATP. Catalysis depends on histidine 117, which acts as the Pros-phosphohistidine intermediate.

The protein belongs to the NDK family. Homotetramer. Mg(2+) is required as a cofactor.

The protein resides in the cytoplasm. It catalyses the reaction a 2'-deoxyribonucleoside 5'-diphosphate + ATP = a 2'-deoxyribonucleoside 5'-triphosphate + ADP. It carries out the reaction a ribonucleoside 5'-diphosphate + ATP = a ribonucleoside 5'-triphosphate + ADP. Major role in the synthesis of nucleoside triphosphates other than ATP. The ATP gamma phosphate is transferred to the NDP beta phosphate via a ping-pong mechanism, using a phosphorylated active-site intermediate. In Rickettsia canadensis (strain McKiel), this protein is Nucleoside diphosphate kinase.